The following is a 209-amino-acid chain: Pyrrolidone-carboxylate peptidase (209 aa).

Active-site residues include Glu79, Cys142, and His164.

It belongs to the peptidase C15 family. As to quaternary structure, homotetramer.

The protein resides in the cytoplasm. The catalysed reaction is Release of an N-terminal pyroglutamyl group from a polypeptide, the second amino acid generally not being Pro.. Its function is as follows. Removes 5-oxoproline from various penultimate amino acid residues except L-proline. The protein is Pyrrolidone-carboxylate peptidase of Saccharolobus islandicus (strain L.S.2.15 / Lassen #1) (Sulfolobus islandicus).